Reading from the N-terminus, the 367-residue chain is tRNA-specific 2-thiouridylase MnmA (367 aa).

Residues Gly-9–Ser-16 and Met-35 each bind ATP. Residues Asn-95–Asp-97 are interaction with target base in tRNA. Residue Cys-100 is the Nucleophile of the active site. Cys-100 and Cys-196 are oxidised to a cystine. Gly-124 serves as a coordination point for ATP. Residues Lys-146 to Gln-148 form an interaction with tRNA region. Cys-196 serves as the catalytic Cysteine persulfide intermediate. Residues Arg-308–Tyr-309 form an interaction with tRNA region.

Belongs to the MnmA/TRMU family.

It localises to the cytoplasm. It carries out the reaction S-sulfanyl-L-cysteinyl-[protein] + uridine(34) in tRNA + AH2 + ATP = 2-thiouridine(34) in tRNA + L-cysteinyl-[protein] + A + AMP + diphosphate + H(+). In terms of biological role, catalyzes the 2-thiolation of uridine at the wobble position (U34) of tRNA, leading to the formation of s(2)U34. This chain is tRNA-specific 2-thiouridylase MnmA, found in Nitrosococcus oceani (strain ATCC 19707 / BCRC 17464 / JCM 30415 / NCIMB 11848 / C-107).